The following is a 467-amino-acid chain: Neutral protease 2 homolog NFIA_031120 (467 aa).

A signal peptide spans 1 to 19; the sequence is MKITALASAILAVVHGALA. Positions 20–172 are excised as a propeptide; it reads LPARAPALDI…PASIKPLDRR (153 aa). 2 disulfides stabilise this stretch: cysteine 179-cysteine 251 and cysteine 258-cysteine 276. Histidine 300 contributes to the Zn(2+) binding site. Residue glutamate 301 is part of the active site. Zn(2+) is bound by residues histidine 304 and aspartate 315. Positions 359 to 451 are enriched in polar residues; the sequence is WDGNSQPGQT…TMWDGSSEPG (93 aa). The tract at residues 359-467 is disordered; sequence WDGNSQPGQT…HTTWGNFYQA (109 aa).

It belongs to the peptidase M35 family. It depends on Zn(2+) as a cofactor.

It localises to the secreted. It carries out the reaction Preferential cleavage of bonds with hydrophobic residues in P1'. Also 3-Asn-|-Gln-4 and 8-Gly-|-Ser-9 bonds in insulin B chain.. Secreted metalloproteinase that allows assimilation of proteinaceous substrates. Shows high activities on basic nuclear substrates such as histone and protamine. The chain is Neutral protease 2 homolog NFIA_031120 from Neosartorya fischeri (strain ATCC 1020 / DSM 3700 / CBS 544.65 / FGSC A1164 / JCM 1740 / NRRL 181 / WB 181) (Aspergillus fischerianus).